Consider the following 186-residue polypeptide: Protein MTH_152 (186 aa).

It belongs to the flavoredoxin family. Homodimer. It depends on FMN as a cofactor.

In Methanothermobacter thermautotrophicus (strain ATCC 29096 / DSM 1053 / JCM 10044 / NBRC 100330 / Delta H) (Methanobacterium thermoautotrophicum), this protein is Protein MTH_152.